Here is a 146-residue protein sequence, read N- to C-terminus: Hemoglobin subunit beta-2 (146 aa).

The 145-residue stretch at 2–146 folds into the Globin domain; the sequence is EWTDFERATI…VVSALGRQYH (145 aa). 2 residues coordinate heme b: histidine 63 and histidine 92.

This sequence belongs to the globin family. As to quaternary structure, hb3 is a heterotetramer of two alpha-2 chains and two beta-2 chains. In terms of tissue distribution, red blood cells.

Functionally, involved in oxygen transport from gills to the various peripheral tissues. The protein is Hemoglobin subunit beta-2 (hbb2) of Anarhichas minor (Arctic spotted wolffish).